The sequence spans 619 residues: MKRKLDANDVPSPEAADDSVKNDVDNLDFESLNLDPRLRQALVKEKFTKPTLVQAKAIPLALEGKDILARAKTGSGKTAAYVLPILQTILQKKANDPSLKATTGLILVPTRELAEQVQNVITTFAAFCGKDVRSVNLTQKVSDAVQRTMLADYPDLIVSTPSRVIANLGSSALSLENLTHLVIDEADLVLSYGYDEDINALAKAIPRGVQTFLMSATLTAEVDTLKGLFCRSPVILKLEDKDDQGSGVSQFVVKCAEDEKFLLTYVIFKLQLIKGKVIIFVGDVDRCYRVKLFLEQFGIKSCVLNSELPVNSRLHVVQEFNKGVYDIIIAADEQEVMGARKSKKSKEAEENDAGEAAGSSDEDEGEAQKPSTTRSDKPSEKRRKTAGKDKDYGISRGIDFQNVACVLNFDLPTTSKSYTHRIGRTGRAGKTGMALSFVVPADQFGKHKPTSFPTAKHDETVLAKITKRQAKLGHEVKPYHFEMKQVDAFRYRMTDALRSITRLAVQEARAREIRQELIKSEKLKRHFEENPEELRQLRHDDELRSARIQPHLKHIPDYLMPSKGKKGISSENVGYVGFRKTSENRIRKAREKNRGKGKGRNYAGVKKVDPLKTFNRGRK.

The segment at 1–22 is disordered; it reads MKRKLDANDVPSPEAADDSVKN. A Q motif motif is present at residues 27–55; that stretch reads LDFESLNLDPRLRQALVKEKFTKPTLVQA. The 179-residue stretch at 58 to 236 folds into the Helicase ATP-binding domain; the sequence is IPLALEGKDI…GLFCRSPVIL (179 aa). 71-78 lines the ATP pocket; that stretch reads AKTGSGKT. Residues 184-187 carry the DEAD box motif; it reads DEAD. In terms of domain architecture, Helicase C-terminal spans 247–484; that stretch reads GVSQFVVKCA…EVKPYHFEMK (238 aa). 2 disordered regions span residues 340-391 and 586-619; these read RKSK…KDKD and IRKA…RGRK. A compositionally biased stretch (basic residues) spans 587–599; the sequence is RKAREKNRGKGKG.

It belongs to the DEAD box helicase family. DDX56/DBP9 subfamily.

The protein resides in the nucleus. Its subcellular location is the nucleolus. It carries out the reaction ATP + H2O = ADP + phosphate + H(+). Its function is as follows. ATP-binding RNA helicase involved in the biogenesis of 60S ribosomal subunits and is required for the normal formation of 25S and 5.8S rRNAs. The protein is ATP-dependent RNA helicase dbp9 (dbp9) of Aspergillus terreus (strain NIH 2624 / FGSC A1156).